The sequence spans 343 residues: Dehydrodolichyl diphosphate synthase complex subunit SRT1 (343 aa).

It belongs to the UPP synthase family. In terms of assembly, forms an active dehydrodolichyl diphosphate synthase complex with NUS1. Mg(2+) serves as cofactor.

It is found in the lipid droplet. It carries out the reaction n isopentenyl diphosphate + (2E,6E)-farnesyl diphosphate = a di-trans,poly-cis-polyprenyl diphosphate + n diphosphate. The protein operates within protein modification; protein glycosylation. Functionally, with NUS1, forms the dehydrodolichyl diphosphate synthase (DDS) complex, an essential component of the dolichol monophosphate (Dol-P) biosynthetic machinery. Adds multiple copies of isopentenyl pyrophosphate (IPP) to farnesyl pyrophosphate (FPP) to produce dehydrodolichyl diphosphate (Dedol-PP), a precursor of dolichol which is utilized as a sugar carrier in protein glycosylation in the endoplasmic reticulum (ER). The polypeptide is Dehydrodolichyl diphosphate synthase complex subunit SRT1 (Saccharomyces cerevisiae (strain ATCC 204508 / S288c) (Baker's yeast)).